We begin with the raw amino-acid sequence, 426 residues long: Melibiose/raffinose/stachyose-binding protein MelE (426 aa).

A signal peptide spans 1 to 18 (MKHTFVLFLSLILLVLPG). Cysteine 19 carries the N-palmitoyl cysteine lipid modification. The S-diacylglycerol cysteine moiety is linked to residue cysteine 19.

This sequence belongs to the bacterial solute-binding protein 1 family. In terms of assembly, the complex is composed of two ATP-binding proteins (MsmX), two transmembrane proteins (MelC and MelD) and a solute-binding protein (MelE).

It localises to the cell membrane. Its function is as follows. Part of the ABC transporter complex MelEDC-MsmX involved in melibiose, raffinose and stachyose import. Binds melibiose, raffinose and stachyose. The protein is Melibiose/raffinose/stachyose-binding protein MelE of Bacillus subtilis (strain 168).